The sequence spans 230 residues: Orotidine 5'-phosphate decarboxylase (230 aa).

Substrate is bound by residues aspartate 11, lysine 34, 61–70 (DLKLHDIPNT), threonine 117, arginine 179, glutamine 188, glycine 208, and arginine 209. The Proton donor role is filled by lysine 63.

The protein belongs to the OMP decarboxylase family. Type 1 subfamily. In terms of assembly, homodimer.

The enzyme catalyses orotidine 5'-phosphate + H(+) = UMP + CO2. It functions in the pathway pyrimidine metabolism; UMP biosynthesis via de novo pathway; UMP from orotate: step 2/2. Its function is as follows. Catalyzes the decarboxylation of orotidine 5'-monophosphate (OMP) to uridine 5'-monophosphate (UMP). The polypeptide is Orotidine 5'-phosphate decarboxylase (Streptococcus sanguinis (strain SK36)).